The primary structure comprises 440 residues: UDP-N-acetylmuramoylalanine--D-glutamate ligase (440 aa).

ATP is bound at residue 128-134; that stretch reads GTNGKTT.

The protein belongs to the MurCDEF family.

It localises to the cytoplasm. It catalyses the reaction UDP-N-acetyl-alpha-D-muramoyl-L-alanine + D-glutamate + ATP = UDP-N-acetyl-alpha-D-muramoyl-L-alanyl-D-glutamate + ADP + phosphate + H(+). The protein operates within cell wall biogenesis; peptidoglycan biosynthesis. Functionally, cell wall formation. Catalyzes the addition of glutamate to the nucleotide precursor UDP-N-acetylmuramoyl-L-alanine (UMA). This Lawsonia intracellularis (strain PHE/MN1-00) protein is UDP-N-acetylmuramoylalanine--D-glutamate ligase.